A 345-amino-acid chain; its full sequence is Tropomodulin-4 (345 aa).

2 disordered regions span residues 40-64 (PENM…GPLD) and 326-345 (ARAA…QKKR). Basic and acidic residues predominate over residues 336 to 345 (NELRRQQKKR).

The protein belongs to the tropomodulin family. As to quaternary structure, binds to the N-terminus of tropomyosin and to actin.

The protein resides in the cytoplasm. The protein localises to the cytoskeleton. In terms of biological role, blocks the elongation and depolymerization of the actin filaments at the pointed end. The Tmod/TM complex contributes to the formation of the short actin protofilament, which in turn defines the geometry of the membrane skeleton. The chain is Tropomodulin-4 (Tmod4) from Mus musculus (Mouse).